A 310-amino-acid polypeptide reads, in one-letter code: tRNA dimethylallyltransferase (310 aa).

24–31 (GPTASGKT) contacts ATP. Residue 26–31 (TASGKT) coordinates substrate. Residues 49-52 (DSRQ) are interaction with substrate tRNA.

The protein belongs to the IPP transferase family. In terms of assembly, monomer. It depends on Mg(2+) as a cofactor.

The catalysed reaction is adenosine(37) in tRNA + dimethylallyl diphosphate = N(6)-dimethylallyladenosine(37) in tRNA + diphosphate. Its function is as follows. Catalyzes the transfer of a dimethylallyl group onto the adenine at position 37 in tRNAs that read codons beginning with uridine, leading to the formation of N6-(dimethylallyl)adenosine (i(6)A). This Synechococcus sp. (strain CC9311) protein is tRNA dimethylallyltransferase.